Reading from the N-terminus, the 622-residue chain is MPRLEQRFDYVKVSLASPERIIQWGQRTLPNGQVVGEVTKPETINYRTLKPEMDGLFCERIFGPAKDWECHCGKYKRVRHRGIVCERCGVEVTESRVRRHRMGYIKLAAPVTHVWYLKGIPSYMAILLDMPLRDVEQIVYFNSYVVLDPGNHPGLSYKQLLSEDQWQDIEEEIYREDSELEGVEVGIGAEAIQRLLRDLDLQAEADQLRQEILNSKGQKRAKLIKRLRVIDNFIATGAKPEWMVLTVIPVIPPDLRPMVQLDGGRFATSDLNDLYRRVINRNNRLARLQEILAPEIIVRNEKRMLQEAVDALIDNGRRGRTVVGANNRPLKSLSDIIEGKQGRFRQNLLGKRVDYSGRSVIVVGPKLQMHQCGLPREMAIELFQPFVIHRLIRQQIVNNIKAAKRMIQRNDPQIWDVLEEVIEGHPVLLNRAPTLHRLGIQAFEPILVEGRAIQLHPLVCPAFNADFDGDQMAVHVPLSIEAQAEARMLMLASNNILSPATGKPIITPSQDMVLGCYYLTAENPKLPDYSDRYYANFQDVVMAYEQGHLPLHAFVWVRYDGEVDDGDTSEPQITTYEDGSRLLEYALRRVKEDANGQRISQYIRTTPGRIIYNQTIQEALAS.

Zn(2+) contacts are provided by cysteine 70, cysteine 72, cysteine 85, and cysteine 88. Mg(2+) contacts are provided by aspartate 466, aspartate 468, and aspartate 470.

It belongs to the RNA polymerase beta' chain family. RpoC1 subfamily. As to quaternary structure, in cyanobacteria the RNAP catalytic core is composed of 2 alpha, 1 beta, 1 beta', 1 gamma and 1 omega subunit. When a sigma factor is associated with the core the holoenzyme is formed, which can initiate transcription. It depends on Mg(2+) as a cofactor. Zn(2+) serves as cofactor.

The catalysed reaction is RNA(n) + a ribonucleoside 5'-triphosphate = RNA(n+1) + diphosphate. In terms of biological role, DNA-dependent RNA polymerase catalyzes the transcription of DNA into RNA using the four ribonucleoside triphosphates as substrates. The sequence is that of DNA-directed RNA polymerase subunit gamma from Thermosynechococcus vestitus (strain NIES-2133 / IAM M-273 / BP-1).